A 305-amino-acid chain; its full sequence is Dihydroorotate dehydrogenase B (NAD(+)), catalytic subunit (305 aa).

FMN contacts are provided by residues serine 23 and 47 to 48 (KG). Residues lysine 47 and 71 to 75 (NAIGL) contribute to the substrate site. Positions 101 and 129 each coordinate FMN. Asparagine 129 provides a ligand contact to substrate. Residue cysteine 132 is the Nucleophile of the active site. FMN contacts are provided by lysine 167 and isoleucine 193. Residue 194-195 (NT) participates in substrate binding. Residues glycine 219, 245 to 246 (GG), and 267 to 268 (GT) contribute to the FMN site.

The protein belongs to the dihydroorotate dehydrogenase family. Type 1 subfamily. In terms of assembly, heterotetramer of 2 PyrK and 2 PyrD type B subunits. It depends on FMN as a cofactor.

The protein resides in the cytoplasm. It carries out the reaction (S)-dihydroorotate + NAD(+) = orotate + NADH + H(+). Its pathway is pyrimidine metabolism; UMP biosynthesis via de novo pathway; orotate from (S)-dihydroorotate (NAD(+) route): step 1/1. In terms of biological role, catalyzes the conversion of dihydroorotate to orotate with NAD(+) as electron acceptor. The protein is Dihydroorotate dehydrogenase B (NAD(+)), catalytic subunit (pyrD) of Geotalea uraniireducens (strain Rf4) (Geobacter uraniireducens).